Here is a 282-residue protein sequence, read N- to C-terminus: Shikimate dehydrogenase (NADP(+)) (282 aa).

Shikimate-binding positions include 24-26 (SRS) and Thr-71. The Proton acceptor role is filled by Lys-75. An NADP(+)-binding site is contributed by Asp-87. 2 residues coordinate shikimate: Asn-96 and Asp-112. Residues 138–142 (GAGGA), 162–167 (NRTRIR), and Leu-227 contribute to the NADP(+) site. Tyr-229 provides a ligand contact to shikimate. Gly-250 is an NADP(+) binding site.

The protein belongs to the shikimate dehydrogenase family. Homodimer.

It carries out the reaction shikimate + NADP(+) = 3-dehydroshikimate + NADPH + H(+). It participates in metabolic intermediate biosynthesis; chorismate biosynthesis; chorismate from D-erythrose 4-phosphate and phosphoenolpyruvate: step 4/7. Its function is as follows. Involved in the biosynthesis of the chorismate, which leads to the biosynthesis of aromatic amino acids. Catalyzes the reversible NADPH linked reduction of 3-dehydroshikimate (DHSA) to yield shikimate (SA). In Paracoccus denitrificans (strain Pd 1222), this protein is Shikimate dehydrogenase (NADP(+)).